We begin with the raw amino-acid sequence, 117 residues long: Large ribosomal subunit protein bL20 (117 aa).

This sequence belongs to the bacterial ribosomal protein bL20 family.

Its function is as follows. Binds directly to 23S ribosomal RNA and is necessary for the in vitro assembly process of the 50S ribosomal subunit. It is not involved in the protein synthesizing functions of that subunit. In Geobacter metallireducens (strain ATCC 53774 / DSM 7210 / GS-15), this protein is Large ribosomal subunit protein bL20.